The following is a 137-amino-acid chain: MSEEQVNIKKKEKWGIAHIYSSYNNTIIHITDITGAETISRWSGGMVVKADRDEPSPYAAMLAARRAAEEALEKGIVGVHIRVRAPGGSKSKTPGPGAQAAIRALARAGLKIGRVEDVTPIPHDGTRPKGGRRGRRV.

A disordered region spans residues 116-137; sequence EDVTPIPHDGTRPKGGRRGRRV.

It belongs to the universal ribosomal protein uS11 family. Part of the 30S ribosomal subunit.

Located on the platform of the 30S subunit. The chain is Small ribosomal subunit protein uS11 from Pyrococcus abyssi (strain GE5 / Orsay).